The sequence spans 141 residues: Large ribosomal subunit protein uL13 (141 aa).

It belongs to the universal ribosomal protein uL13 family. As to quaternary structure, part of the 50S ribosomal subunit.

Functionally, this protein is one of the early assembly proteins of the 50S ribosomal subunit, although it is not seen to bind rRNA by itself. It is important during the early stages of 50S assembly. The chain is Large ribosomal subunit protein uL13 from Sulfurovum sp. (strain NBC37-1).